The primary structure comprises 245 residues: 14-3-3 protein zeta/delta (245 aa).

Position 1 is an N-acetylmethionine (methionine 1). Lysine 3 bears the N6-acetyllysine mark. Serine 58 is modified (phosphoserine; by PKA). Lysine 68 bears the N6-acetyllysine mark. Phosphoserine is present on residues serine 184, serine 207, and serine 210. Threonine 232 carries the post-translational modification Phosphothreonine; by CK1.

The protein belongs to the 14-3-3 family. As to quaternary structure, homodimer. Heterodimerizes with YWHAE. Homo- and heterodimerization is inhibited by phosphorylation on Ser-58. Interacts with FOXO4, NOXA1, SSH1 and ARHGEF2. Interacts with CDK16 and with WEE1 (C-terminal). Interacts with MLF1 (phosphorylated form); the interaction retains it in the cytoplasm. Interacts with BSPRY. Interacts with Thr-phosphorylated ITGB2. Interacts with Pseudomonas aeruginosa exoS (unphosphorylated form). Interacts with BAX; the interaction occurs in the cytoplasm. Under stress conditions, MAPK8-mediated phosphorylation releases BAX to mitochondria. Interacts with phosphorylated RAF1; the interaction is inhibited when YWHAZ is phosphorylated on Thr-232. Interacts with TP53; the interaction enhances p53 transcriptional activity. The Ser-58 phosphorylated form inhibits this interaction and p53 transcriptional activity. Interacts with ABL1 (phosphorylated form); the interaction retains ABL1 in the cytoplasm. Interacts with PKA-phosphorylated AANAT; the interaction modulates AANAT enzymatic activity by increasing affinity for arylalkylamines and acetyl-CoA and protecting the enzyme from dephosphorylation and proteasomal degradation. It may also prevent thiol-dependent inactivation. Interacts with AKT1; the interaction phosphorylates YWHAZ and modulates dimerization. Interacts with GAB2. Interacts with SAMSN1. Interacts with BCL2L11 and TLK2. Interacts with the 'Thr-369' phosphorylated form of DAPK2. Interacts with PI4KB, TBC1D22A and TBC1D22B. Interacts with ZFP36L1 (via phosphorylated form); this interaction occurs in a p38 MAPK- and AKT-signaling pathways. Interacts with SLITRK1. Interacts with AK5, LDB1, MADD, PDE1A and SMARCB1. Interacts with ARHGEF7 and GIT1. Interacts with MEFV. Interacts with ADAM22 (via C-terminus). In terms of processing, the delta, brain-specific form differs from the zeta form in being phosphorylated. Phosphorylation on Ser-184 by MAPK8; promotes dissociation of BAX and translocation of BAX to mitochondria. Phosphorylation on Thr-232; inhibits binding of RAF1. Phosphorylated on Ser-58 by PKA and protein kinase C delta type catalytic subunit in a sphingosine-dependent fashion. Phosphorylation on Ser-58 by PKA; disrupts homodimerization and heterodimerization with YHAE and TP53.

The protein resides in the cytoplasm. It is found in the melanosome. Its function is as follows. Adapter protein implicated in the regulation of a large spectrum of both general and specialized signaling pathways. Binds to a large number of partners, usually by recognition of a phosphoserine or phosphothreonine motif. Binding generally results in the modulation of the activity of the binding partner. Promotes cytosolic retention and inactivation of TFEB transcription factor by binding to phosphorylated TFEB. Induces ARHGEF7 activity on RAC1 as well as lamellipodia and membrane ruffle formation. In neurons, regulates spine maturation through the modulation of ARHGEF7 activity. This is 14-3-3 protein zeta/delta (Ywhaz) from Mus musculus (Mouse).